The sequence spans 247 residues: Dof zinc finger protein DOF3.5 (247 aa).

The Dof-type zinc finger occupies 25–79 (PSCPRCGSSNTKFCYYNNYSLTQPRYFCKGCRRYWTKGGSLRNVPVGGGCRKSRR). C27, C30, C52, and C55 together coordinate Zn(2+). The interval 70-100 (VGGGCRKSRRPKSSSGNNTKTSLTANSGNPG) is disordered. Residues 82-94 (SSSGNNTKTSLTA) are compositionally biased toward polar residues.

The protein resides in the nucleus. Its function is as follows. Transcription factor that binds specifically to a 5'-AA[AG]G-3' consensus core sequence. In Arabidopsis thaliana (Mouse-ear cress), this protein is Dof zinc finger protein DOF3.5 (DOF3.5).